Reading from the N-terminus, the 68-residue chain is ATP synthase F(0) complex subunit 8 (68 aa).

The chain crosses the membrane as a helical span at residues 8 to 21 (VWPTMITPMLLTLF). Lysine 54 carries the N6-acetyllysine; alternate modification. Residue lysine 54 is modified to N6-succinyllysine; alternate. The residue at position 57 (lysine 57) is an N6-acetyllysine.

The protein belongs to the ATPase protein 8 family. Component of the ATP synthase complex composed at least of ATP5F1A/subunit alpha, ATP5F1B/subunit beta, ATP5MC1/subunit c (homooctomer), MT-ATP6/subunit a, MT-ATP8/subunit 8, ATP5ME/subunit e, ATP5MF/subunit f, ATP5MG/subunit g, ATP5MK/subunit k, ATP5MJ/subunit j, ATP5F1C/subunit gamma, ATP5F1D/subunit delta, ATP5F1E/subunit epsilon, ATP5PF/subunit F6, ATP5PB/subunit b, ATP5PD/subunit d, ATP5PO/subunit OSCP. ATP synthase complex consists of a soluble F(1) head domain (subunits alpha(3) and beta(3)) - the catalytic core - and a membrane F(0) domain - the membrane proton channel (subunits c, a, 8, e, f, g, k and j). These two domains are linked by a central stalk (subunits gamma, delta, and epsilon) rotating inside the F1 region and a stationary peripheral stalk (subunits F6, b, d, and OSCP). Interacts with PRICKLE3.

The protein localises to the mitochondrion membrane. Its function is as follows. Subunit 8, of the mitochondrial membrane ATP synthase complex (F(1)F(0) ATP synthase or Complex V) that produces ATP from ADP in the presence of a proton gradient across the membrane which is generated by electron transport complexes of the respiratory chain. ATP synthase complex consist of a soluble F(1) head domain - the catalytic core - and a membrane F(1) domain - the membrane proton channel. These two domains are linked by a central stalk rotating inside the F(1) region and a stationary peripheral stalk. During catalysis, ATP synthesis in the catalytic domain of F(1) is coupled via a rotary mechanism of the central stalk subunits to proton translocation. In vivo, can only synthesize ATP although its ATP hydrolase activity can be activated artificially in vitro. Part of the complex F(0) domain. This is ATP synthase F(0) complex subunit 8 from Homo sapiens (Human).